Here is an 835-residue protein sequence, read N- to C-terminus: Invasin (835 aa).

One can recognise a Big-1 domain in the interval 451-541 (VITSEVTDDG…QQATVDVRFA (91 aa)).

The protein belongs to the intimin/invasin family.

The protein resides in the cell outer membrane. In terms of biological role, invasin is a protein that allows enteric bacteria to penetrate cultured mammalian cells. The entry of invasin in the cell is mediated by binding several beta-1 chain integrins. The sequence is that of Invasin from Yersinia enterocolitica.